We begin with the raw amino-acid sequence, 165 residues long: uncharacterized protein (165 aa).

A disordered region spans residues 49 to 165 (QLKPQGPKRP…VAQQREIAQK (117 aa)). The span at 94–106 (MNNNNNYKISYTS) shows a compositional bias: polar residues. The segment covering 120-135 (TLQRTTPQAQPTPQQP) has biased composition (low complexity). Residues 139 to 157 (SRSSGGITGAVNNRPQMVA) show a composition bias toward polar residues.

This is an uncharacterized protein from Caenorhabditis elegans.